We begin with the raw amino-acid sequence, 322 residues long: MNSIHGHYHIQLSNYSAGENLQSATLTEGVIGAHRVKVETALSHSNLQKKLSATIKHNQSGRSMLDRKLTSDGKANQRSSFTFSMIMYRMIHFVLSTRVPAVRESVANYGGNINFKFAQTKGAFLHKIIKHSDTASGVCEALCAHWIRSHAQGQSLFDQLYVGGRKGKFQIDTLYSIKQLQIDGCKADVDQDEVTLDWFKKNGISERMIERHCLLRPVDVTGTTESEGLDQLLNAILDTHGIGYGYKKIHLSGQMSAHAIAAYVNEKSGVTFFDPNFGEFHFSDKEKFRKWFTNSFWGNSMYHYPLGVGQRFRVLTFDSKEV.

Catalysis depends on residues Cys-139, His-258, and Asp-274.

The protein belongs to the peptidase C58 family. Interacts with human ARHA.

Its subcellular location is the secreted. Its function is as follows. Cysteine protease, which is translocated into infected cells and plays a central role in pathogenesis by cleaving the C-terminus end of the human small GTPase RhoA/ARHA, a regulator of cytoskeleton. Once cleaved, ARHA loses its lipid modification, and is released from the cell membrane, leading to the subsequent disruption of actin cytoskeleton of the host cell. The sequence is that of Cysteine protease YopT (yopT) from Yersinia pestis.